The sequence spans 163 residues: Endoribonuclease YbeY (163 aa).

Zn(2+) contacts are provided by H123, H127, and H133.

The protein belongs to the endoribonuclease YbeY family. Requires Zn(2+) as cofactor.

It is found in the cytoplasm. Functionally, single strand-specific metallo-endoribonuclease involved in late-stage 70S ribosome quality control and in maturation of the 3' terminus of the 16S rRNA. This is Endoribonuclease YbeY from Helicobacter hepaticus (strain ATCC 51449 / 3B1).